Consider the following 807-residue polypeptide: Glycerol-3-phosphate acyltransferase (807 aa).

An HXXXXD motif motif is present at residues 305 to 310 (CHRSHM).

The protein belongs to the GPAT/DAPAT family.

It localises to the cell inner membrane. The catalysed reaction is sn-glycerol 3-phosphate + an acyl-CoA = a 1-acyl-sn-glycero-3-phosphate + CoA. The protein operates within phospholipid metabolism; CDP-diacylglycerol biosynthesis; CDP-diacylglycerol from sn-glycerol 3-phosphate: step 1/3. The chain is Glycerol-3-phosphate acyltransferase from Aliivibrio fischeri (strain MJ11) (Vibrio fischeri).